A 152-amino-acid polypeptide reads, in one-letter code: SsrA-binding protein (152 aa).

It belongs to the SmpB family.

It is found in the cytoplasm. Its function is as follows. Required for rescue of stalled ribosomes mediated by trans-translation. Binds to transfer-messenger RNA (tmRNA), required for stable association of tmRNA with ribosomes. tmRNA and SmpB together mimic tRNA shape, replacing the anticodon stem-loop with SmpB. tmRNA is encoded by the ssrA gene; the 2 termini fold to resemble tRNA(Ala) and it encodes a 'tag peptide', a short internal open reading frame. During trans-translation Ala-aminoacylated tmRNA acts like a tRNA, entering the A-site of stalled ribosomes, displacing the stalled mRNA. The ribosome then switches to translate the ORF on the tmRNA; the nascent peptide is terminated with the 'tag peptide' encoded by the tmRNA and targeted for degradation. The ribosome is freed to recommence translation, which seems to be the essential function of trans-translation. The chain is SsrA-binding protein from Lactobacillus helveticus (strain DPC 4571).